The sequence spans 264 residues: Acyl-[acyl-carrier-protein]--UDP-N-acetylglucosamine O-acyltransferase (264 aa).

The protein belongs to the transferase hexapeptide repeat family. LpxA subfamily. Homotrimer.

Its subcellular location is the cytoplasm. It carries out the reaction a (3R)-hydroxyacyl-[ACP] + UDP-N-acetyl-alpha-D-glucosamine = a UDP-3-O-[(3R)-3-hydroxyacyl]-N-acetyl-alpha-D-glucosamine + holo-[ACP]. Its pathway is glycolipid biosynthesis; lipid IV(A) biosynthesis; lipid IV(A) from (3R)-3-hydroxytetradecanoyl-[acyl-carrier-protein] and UDP-N-acetyl-alpha-D-glucosamine: step 1/6. Involved in the biosynthesis of lipid A, a phosphorylated glycolipid that anchors the lipopolysaccharide to the outer membrane of the cell. This Leptothrix cholodnii (strain ATCC 51168 / LMG 8142 / SP-6) (Leptothrix discophora (strain SP-6)) protein is Acyl-[acyl-carrier-protein]--UDP-N-acetylglucosamine O-acyltransferase.